The chain runs to 713 residues: Cadherin-13 (713 aa).

The N-terminal stretch at 1–22 is a signal peptide; it reads MQPRTPLVLCVLLSQVLLLTSA. The propeptide occupies 23 to 138; the sequence is EDLDCIPGFQ…RTSPVPRQKR (116 aa). N-linked (GlcNAc...) asparagine glycosylation is found at Asn-52 and Asn-86. 5 Cadherin domains span residues 139–245, 246–363, 364–477, 478–585, and 584–690; these read SIVV…RPIF, REGP…SPKF, TKKE…GPVF, YPDP…APFI, and FIYP…VDSN. Residues Asn-382, Asn-489, Asn-500, Asn-530, Asn-598, Asn-638, and Asn-671 are each glycosylated (N-linked (GlcNAc...) asparagine). Residue Asn-690 is the site of GPI-anchor amidated asparagine attachment. Positions 691 to 713 are cleaved as a propeptide — removed in mature form; that stretch reads AVGALRFSLPSLLLLSLFSLACL.

By contrast to classical cadherins, homodimerization in trans is not mediated by cadherin EC1 domain strand-swapping, but instead through a homophilic adhesive interface which joins two elongated EC1-EC2 domains through a region near their Ca2+-binding sites to form a tetrahedral, X-like shape.

The protein resides in the cell membrane. It is found in the cytoplasm. Its function is as follows. Cadherins are calcium-dependent cell adhesion proteins. They preferentially interact with themselves in a homophilic manner in connecting cells; cadherins may thus contribute to the sorting of heterogeneous cell types. May act as a negative regulator of neural cell growth. This is Cadherin-13 (CDH13) from Pongo abelii (Sumatran orangutan).